We begin with the raw amino-acid sequence, 437 residues long: Selenocysteine lyase (437 aa).

At Met1 the chain carries N-acetylmethionine. Residues Met1–Asn30 are disordered. A compositionally biased stretch (basic and acidic residues) spans Arg7–Tyr26. Residue Lys252 is modified to N6-(pyridoxal phosphate)lysine. Cys380 acts as the S-selanylcysteine intermediate in catalysis.

It belongs to the class-V pyridoxal-phosphate-dependent aminotransferase family. As to quaternary structure, homodimer. Requires pyridoxal 5'-phosphate as cofactor.

The protein resides in the cytoplasm. It localises to the cytosol. The enzyme catalyses L-selenocysteine + AH2 = hydrogenselenide + L-alanine + A + H(+). In terms of biological role, catalyzes the decomposition of L-selenocysteine to L-alanine and elemental selenium. The chain is Selenocysteine lyase (SCLY) from Bos taurus (Bovine).